The sequence spans 87 residues: DNA-directed RNA polymerase subunit omega (87 aa).

The protein belongs to the RNA polymerase subunit omega family. In terms of assembly, the RNAP catalytic core consists of 2 alpha, 1 beta, 1 beta' and 1 omega subunit. When a sigma factor is associated with the core the holoenzyme is formed, which can initiate transcription.

It catalyses the reaction RNA(n) + a ribonucleoside 5'-triphosphate = RNA(n+1) + diphosphate. In terms of biological role, promotes RNA polymerase assembly. Latches the N- and C-terminal regions of the beta' subunit thereby facilitating its interaction with the beta and alpha subunits. This is DNA-directed RNA polymerase subunit omega from Thioalkalivibrio sulfidiphilus (strain HL-EbGR7).